A 320-amino-acid polypeptide reads, in one-letter code: Arginine/serine-rich protein 1 (320 aa).

Residues 1-22 (MKTEASPGRLHEDVKLIFDKKA) show a composition bias toward basic and acidic residues. Disordered regions lie at residues 1 to 180 (MKTE…SRER) and 215 to 299 (LKEM…ADIV). Low complexity-rich tracts occupy residues 24-48 (SGRSSSCSSSSSSSSGSSYSSSRGS) and 56-74 (TSSSSRSSSSGSSSSSNSR). Composition is skewed to basic residues over residues 75-102 (SRSRPRCSGRVHCRHRHRSPPRRYRARS), 114-158 (RRRH…RYRC), and 166-175 (RSPRPYRSRS). A phosphoserine mark is found at Ser135 and Ser137. Over residues 215 to 238 (LKEMEQQEERKRRSSSDEEERVRV) the composition is skewed to basic and acidic residues. Over residues 271 to 293 (VFSNNNAIAKPSSSPTLSDSKVT) the composition is skewed to polar residues.

It belongs to the RSRP family. In terms of processing, phosphorylated. Phosphorylation at Ser-135 and Ser-137 mediates the interaction with spliceosome proteins.

Its subcellular location is the nucleus. In terms of biological role, probably acts as a spliceosomal factor that contributes to spliceosome assembly and regulates the isoform switching of proteins such as PARP6. The chain is Arginine/serine-rich protein 1 (rsrp1) from Danio rerio (Zebrafish).